Reading from the N-terminus, the 205-residue chain is Ras-related protein rab-6.2 (205 aa).

GTP-binding positions include 18–25 (EQSVGKTS), T42, 66–70 (TAGQE), and 124–127 (KTDL). Residues C203 and C205 are each lipidated (S-geranylgeranyl cysteine). Position 205 is a cysteine methyl ester (C205).

The protein belongs to the small GTPase superfamily. Rab family. In terms of assembly, interacts with GARP complex component vps-52. Interacts (in GTP-bound form) with lin-10. May interact (in GTP-bound form) with eat-17. As to expression, highly expressed in body wall muscles, pharyngeal and vulval muscles, hypodermis, intestine, the gonad, coelomocytes, and neurons, including command interneuron (at protein level). Highly expressed in the terminal bulb muscles.

The protein localises to the perikaryon. The protein resides in the cell projection. It localises to the dendrite. Its subcellular location is the golgi apparatus. It is found in the cytoplasmic vesicle. The small GTPases Rab are key regulators of intracellular membrane trafficking, from the formation of transport vesicles to their fusion with membranes. Rabs cycle between an inactive GDP-bound form and an active GTP-bound form that is able to recruit to membranes different set of downstream effectors directly responsible for vesicle formation, movement, tethering and fusion. In its active GTP-bound form, acts redundantly with rab-6.1 (in its active GTP-bound form) to positively regulate the retrograde trafficking of cargo molecules from endosomes to the Golgi compartment. Required for the retrograde trafficking of glr-1, a subunit of AMPA-type glutamate receptors (AMPRs), out of early endosomes and into the Golgi compartment in neurons. Its role in glr-1 trafficking may partly be mediated by its interaction with lin-10 and association with components of the retromer complex such as rme-8. Together with rab-6.2, promotes the retrograde trafficking of mig-14 from endosomes to Golgi structures in the intestine. Plays a role in the epidermis to promote cuticle integrity and impermeability of the cuticle barrier to exogenous molecules. May have a role in the glycosylation of the cuticular surface. Required for seam cell division and alae formation. Required for grinder formation, which is the feeding organ that breaks down food. In contrast to rab-6.1, may play a minor role in the exocytosis of secretory vesicles (cortical granules) during the oocyte-to-embryo transition. The polypeptide is Ras-related protein rab-6.2 (Caenorhabditis elegans).